We begin with the raw amino-acid sequence, 242 residues long: Probable septum site-determining protein MinC (242 aa).

Residues 120–135 show a composition bias toward basic and acidic residues; that stretch reads APKKVEEKPAEPEHKP. Residues 120-144 are disordered; that stretch reads APKKVEEKPAEPEHKPSRIVTSPVR.

This sequence belongs to the MinC family. Interacts with MinD and FtsZ.

Cell division inhibitor that blocks the formation of polar Z ring septums. Rapidly oscillates between the poles of the cell to destabilize FtsZ filaments that have formed before they mature into polar Z rings. Prevents FtsZ polymerization. The chain is Probable septum site-determining protein MinC from Ectopseudomonas mendocina (strain ymp) (Pseudomonas mendocina).